Here is a 127-residue protein sequence, read N- to C-terminus: Protein ApaG (127 aa).

Positions 3–127 (DDPRYRVEVE…FVLSVPRTLH (125 aa)) constitute an ApaG domain.

This Xanthomonas axonopodis pv. citri (strain 306) protein is Protein ApaG.